A 249-amino-acid polypeptide reads, in one-letter code: 2,3-bisphosphoglycerate-dependent phosphoglycerate mutase (249 aa).

Substrate contacts are provided by residues 8 to 15 (RHGQSVWN), 21 to 22 (TG), R60, 87 to 90 (ERHY), K98, 114 to 115 (RR), and 183 to 184 (GN). The active-site Tele-phosphohistidine intermediate is the H9. E87 acts as the Proton donor/acceptor in catalysis.

It belongs to the phosphoglycerate mutase family. BPG-dependent PGAM subfamily. Homodimer.

It catalyses the reaction (2R)-2-phosphoglycerate = (2R)-3-phosphoglycerate. It functions in the pathway carbohydrate degradation; glycolysis; pyruvate from D-glyceraldehyde 3-phosphate: step 3/5. In terms of biological role, catalyzes the interconversion of 2-phosphoglycerate and 3-phosphoglycerate. In Solidesulfovibrio magneticus (strain ATCC 700980 / DSM 13731 / RS-1) (Desulfovibrio magneticus), this protein is 2,3-bisphosphoglycerate-dependent phosphoglycerate mutase.